Here is a 401-residue protein sequence, read N- to C-terminus: Nuclear hormone receptor family member nhr-65 (401 aa).

The segment at residues 10–79 (PERCKVCGDT…AGMSSENFQF (70 aa)) is a DNA-binding region (nuclear receptor). 2 consecutive NR C4-type zinc fingers follow at residues 13–33 (CKVCGDTGNGMHFGAFTCRAC) and 49–67 (CENHLIFALKCKNCRLQRC). An NR LBD domain is found at 132 to 398 (KAEKLIEFGS…FSHPEFIQDA (267 aa)).

It belongs to the nuclear hormone receptor family.

The protein resides in the nucleus. Orphan nuclear receptor. This Caenorhabditis elegans protein is Nuclear hormone receptor family member nhr-65 (nhr-65).